A 209-amino-acid chain; its full sequence is Orotate phosphoribosyltransferase (209 aa).

5-phospho-alpha-D-ribose 1-diphosphate contacts are provided by residues Arg-96, Lys-100, His-102, and 122–130 (EDLISTGGS). Orotate is bound at residue Ser-126.

It belongs to the purine/pyrimidine phosphoribosyltransferase family. PyrE subfamily. Homodimer. Mg(2+) is required as a cofactor.

It catalyses the reaction orotidine 5'-phosphate + diphosphate = orotate + 5-phospho-alpha-D-ribose 1-diphosphate. It functions in the pathway pyrimidine metabolism; UMP biosynthesis via de novo pathway; UMP from orotate: step 1/2. In terms of biological role, catalyzes the transfer of a ribosyl phosphate group from 5-phosphoribose 1-diphosphate to orotate, leading to the formation of orotidine monophosphate (OMP). The chain is Orotate phosphoribosyltransferase from Streptococcus mutans serotype c (strain ATCC 700610 / UA159).